The chain runs to 207 residues: Adenylyl-sulfate kinase (207 aa).

39 to 46 (GLSGAGKS) contributes to the ATP binding site. Residue Ser113 is the Phosphoserine intermediate of the active site.

It belongs to the APS kinase family.

It catalyses the reaction adenosine 5'-phosphosulfate + ATP = 3'-phosphoadenylyl sulfate + ADP + H(+). It functions in the pathway sulfur metabolism; hydrogen sulfide biosynthesis; sulfite from sulfate: step 2/3. Functionally, catalyzes the synthesis of activated sulfate. The protein is Adenylyl-sulfate kinase of Vibrio vulnificus (strain CMCP6).